Consider the following 150-residue polypeptide: Ribonuclease pancreatic (150 aa).

The N-terminal stretch at 1–26 is a signal peptide; that stretch reads MALKSLVLLSLLVLVLLLVRVQPSLG. N-linked (Glc) (glycation) lysine; in vitro glycans are attached at residues K27 and K33. Substrate-binding residues include K33 and R36. Catalysis depends on H38, which acts as the Proton acceptor. Intrachain disulfides connect C52-C110, C66-C121, C84-C136, and C91-C98. N60 is a glycosylation site (N-linked (GlcNAc...) asparagine; partial). K63 and K67 each carry an N-linked (Glc) (glycation) lysine; in vitro glycan. Substrate-binding positions include 67 to 71, K92, and R111; that span reads KPVNT. The active-site Proton donor is the H145.

This sequence belongs to the pancreatic ribonuclease family. As to quaternary structure, interacts with and forms tight 1:1 complexes with RNH1. Dimerization of two such complexes may occur. Interaction with RNH1 inhibits this protein. Monomer. In terms of tissue distribution, pancreas.

It is found in the secreted. The catalysed reaction is an [RNA] containing cytidine + H2O = an [RNA]-3'-cytidine-3'-phosphate + a 5'-hydroxy-ribonucleotide-3'-[RNA].. The enzyme catalyses an [RNA] containing uridine + H2O = an [RNA]-3'-uridine-3'-phosphate + a 5'-hydroxy-ribonucleotide-3'-[RNA].. Its function is as follows. Endonuclease that catalyzes the cleavage of RNA on the 3' side of pyrimidine nucleotides. Acts on single-stranded and double-stranded RNA. The polypeptide is Ribonuclease pancreatic (RNASE1) (Bos taurus (Bovine)).